The primary structure comprises 156 residues: Succinate dehydrogenase assembly factor 2-B, mitochondrial (156 aa).

Residues 1–24 (MLRQFIVSTVGRRLQLPMMAQSRL) constitute a mitochondrion transit peptide.

The protein belongs to the SDHAF2 family. Interacts with the flavoprotein subunit within the SDH catalytic dimer.

Its subcellular location is the mitochondrion matrix. In terms of biological role, plays an essential role in the assembly of succinate dehydrogenase (SDH), an enzyme complex (also referred to as respiratory complex II) that is a component of both the tricarboxylic acid (TCA) cycle and the mitochondrial electron transport chain, and which couples the oxidation of succinate to fumarate with the reduction of ubiquinone (coenzyme Q) to ubiquinol. Required for flavinylation (covalent attachment of FAD) of the flavoprotein subunit of the SDH catalytic dimer. In Drosophila simulans (Fruit fly), this protein is Succinate dehydrogenase assembly factor 2-B, mitochondrial.